The chain runs to 195 residues: 3-isopropylmalate dehydratase small subunit (195 aa).

It belongs to the LeuD family. LeuD type 1 subfamily. In terms of assembly, heterodimer of LeuC and LeuD.

The catalysed reaction is (2R,3S)-3-isopropylmalate = (2S)-2-isopropylmalate. The protein operates within amino-acid biosynthesis; L-leucine biosynthesis; L-leucine from 3-methyl-2-oxobutanoate: step 2/4. Functionally, catalyzes the isomerization between 2-isopropylmalate and 3-isopropylmalate, via the formation of 2-isopropylmaleate. The polypeptide is 3-isopropylmalate dehydratase small subunit (Frankia casuarinae (strain DSM 45818 / CECT 9043 / HFP020203 / CcI3)).